The sequence spans 234 residues: UPF0173 metal-dependent hydrolase Meso_1362 (234 aa).

This sequence belongs to the UPF0173 family.

This is UPF0173 metal-dependent hydrolase Meso_1362 from Chelativorans sp. (strain BNC1).